We begin with the raw amino-acid sequence, 278 residues long: Release factor glutamine methyltransferase (278 aa).

Residues 117–121, Asp-140, and Asn-184 each bind S-adenosyl-L-methionine; that span reads GTGSG. 184–187 lines the substrate pocket; sequence NPPY.

The protein belongs to the protein N5-glutamine methyltransferase family. PrmC subfamily.

It catalyses the reaction L-glutaminyl-[peptide chain release factor] + S-adenosyl-L-methionine = N(5)-methyl-L-glutaminyl-[peptide chain release factor] + S-adenosyl-L-homocysteine + H(+). Methylates the class 1 translation termination release factors RF1/PrfA and RF2/PrfB on the glutamine residue of the universally conserved GGQ motif. In Staphylococcus aureus (strain NCTC 8325 / PS 47), this protein is Release factor glutamine methyltransferase.